Here is a 496-residue protein sequence, read N- to C-terminus: Acyltransferase M4 (496 aa).

Histidine 163 functions as the Proton acceptor in the catalytic mechanism.

Belongs to the plant acyltransferase family. In terms of assembly, monomer.

The protein operates within secondary metabolite biosynthesis. Acyltransferase; part of the gene cluster that mediates the biosynthesis of squalestatin S1 (SQS1, also known as zaragozic acid A), a heavily oxidized fungal polyketide that offers potent cholesterol lowering activity by targeting squalene synthase (SS). SQS1 is composed of a 2,8-dioxobicyclic[3.2.1]octane-3,4,5-tricarboxyclic acid core that is connected to two lipophilic polyketide arms. These initial steps feature the priming of an unusual benzoic acid starter unit onto the highly reducing polyketide synthase pks2, followed by oxaloacetate extension and product release to generate a tricarboxylic acid containing product. The phenylalanine ammonia lyase (PAL) M7 and the acyl-CoA ligase M9 are involved in transforming phenylalanine into benzoyl-CoA. The citrate synthase-like protein R3 is involved in connecting the C-alpha-carbons of the hexaketide chain and oxaloacetate to afford the tricarboxylic acid unit. The potential hydrolytic enzymes, M8 and M10, are in close proximity to pks2 and may participate in product release. On the other side, the tetraketide arm is synthesized by a the squalestatin tetraketide synthase pks1 and enzymatically esterified to the core in the last biosynthetic step, by the acetyltransferase M4. The biosynthesis of the tetraketide must involve 3 rounds of chain extension. After the first and second rounds methyl-transfer occurs, and in all rounds of extension the ketoreductase and dehydratase are active. The enoyl reductase and C-MeT of pks1 are not active in the final round of extension. The acetyltransferase M4 appears to have a broad substrate selectivity for its acyl CoA substrate, allowing the in vitro synthesis of novel squalestatins. The biosynthesis of SQS1 requires several oxidative steps likely performed by oxidoreductases M1, R1 and R2. Finally, in support of the identification of the cluster as being responsible for SQS1 production, the cluster contains a gene encoding a putative squalene synthase (SS) R6, suggesting a likely mechanism for self-resistance. This is Acyltransferase M4 from Phoma sp. (strain ATCC 20986 / MF5453).